A 342-amino-acid chain; its full sequence is Holliday junction branch migration complex subunit RuvB (342 aa).

The segment at 1 to 184 (MEEDFNIRDH…FGINLHLEYY (184 aa)) is large ATPase domain (RuvB-L). Residues leucine 23, arginine 24, glycine 65, lysine 68, threonine 69, threonine 70, 131 to 133 (EDY), arginine 174, tyrosine 184, and arginine 221 each bind ATP. Mg(2+) is bound at residue threonine 69. Residues 185–255 (DDDILSNIIS…IANYALEALN (71 aa)) are small ATPAse domain (RuvB-S). A head domain (RuvB-H) region spans residues 258–342 (KYGLDEIDNK…YNSQKTLFND (85 aa)). DNA is bound by residues arginine 313 and arginine 318.

This sequence belongs to the RuvB family. As to quaternary structure, homohexamer. Forms an RuvA(8)-RuvB(12)-Holliday junction (HJ) complex. HJ DNA is sandwiched between 2 RuvA tetramers; dsDNA enters through RuvA and exits via RuvB. An RuvB hexamer assembles on each DNA strand where it exits the tetramer. Each RuvB hexamer is contacted by two RuvA subunits (via domain III) on 2 adjacent RuvB subunits; this complex drives branch migration. In the full resolvosome a probable DNA-RuvA(4)-RuvB(12)-RuvC(2) complex forms which resolves the HJ.

The protein resides in the cytoplasm. It catalyses the reaction ATP + H2O = ADP + phosphate + H(+). The RuvA-RuvB-RuvC complex processes Holliday junction (HJ) DNA during genetic recombination and DNA repair, while the RuvA-RuvB complex plays an important role in the rescue of blocked DNA replication forks via replication fork reversal (RFR). RuvA specifically binds to HJ cruciform DNA, conferring on it an open structure. The RuvB hexamer acts as an ATP-dependent pump, pulling dsDNA into and through the RuvAB complex. RuvB forms 2 homohexamers on either side of HJ DNA bound by 1 or 2 RuvA tetramers; 4 subunits per hexamer contact DNA at a time. Coordinated motions by a converter formed by DNA-disengaged RuvB subunits stimulates ATP hydrolysis and nucleotide exchange. Immobilization of the converter enables RuvB to convert the ATP-contained energy into a lever motion, pulling 2 nucleotides of DNA out of the RuvA tetramer per ATP hydrolyzed, thus driving DNA branch migration. The RuvB motors rotate together with the DNA substrate, which together with the progressing nucleotide cycle form the mechanistic basis for DNA recombination by continuous HJ branch migration. Branch migration allows RuvC to scan DNA until it finds its consensus sequence, where it cleaves and resolves cruciform DNA. The chain is Holliday junction branch migration complex subunit RuvB from Bacteroides fragilis (strain ATCC 25285 / DSM 2151 / CCUG 4856 / JCM 11019 / LMG 10263 / NCTC 9343 / Onslow / VPI 2553 / EN-2).